A 157-amino-acid chain; its full sequence is Endoribonuclease YbeY (157 aa).

The Zn(2+) site is built by His-116, His-120, and His-126.

Belongs to the endoribonuclease YbeY family. The cofactor is Zn(2+).

The protein resides in the cytoplasm. Single strand-specific metallo-endoribonuclease involved in late-stage 70S ribosome quality control and in maturation of the 3' terminus of the 16S rRNA. This chain is Endoribonuclease YbeY, found in Arthrobacter sp. (strain FB24).